An 801-amino-acid chain; its full sequence is Growth-differentiation transition protein 7 (801 aa).

Positions 1–22 (MIKTILIKLILLVIFCYHFLFA) are cleaved as a signal peptide.

This sequence belongs to the GDT family.

It localises to the secreted. The sequence is that of Growth-differentiation transition protein 7 (gdt7) from Dictyostelium discoideum (Social amoeba).